Reading from the N-terminus, the 230-residue chain is Phosphatidate cytidylyltransferase (230 aa).

6 helical membrane-spanning segments follow: residues 33–53 (FVIA…LVGT), 67–87 (IPDL…LIFL), 95–115 (WLIM…MIGG), 133–153 (WSGL…VSFI), 167–187 (IYLF…DLFI), and 206–226 (HGGV…LFLM).

Belongs to the CDS family.

The protein resides in the cell membrane. The enzyme catalyses a 1,2-diacyl-sn-glycero-3-phosphate + CTP + H(+) = a CDP-1,2-diacyl-sn-glycerol + diphosphate. The protein operates within phospholipid metabolism; CDP-diacylglycerol biosynthesis; CDP-diacylglycerol from sn-glycerol 3-phosphate: step 3/3. This Rickettsia conorii (strain ATCC VR-613 / Malish 7) protein is Phosphatidate cytidylyltransferase (cdsA).